Reading from the N-terminus, the 1538-residue chain is MTEQISLVDVSSSVSLKGEDSSNVALLRDLFINDVAASDPAESSADVHKDEHSSDNSDNDNEAVPKPNDFSQRRRIQNAQFEALLSKRTDADSNEAIDRAPIALSDDELSIAHLVEKQDLGNGMLDPREYQIELFERAKTQNTIAVLDTGSGKTLIAVLLLRHTILNELDNRANGKPHRVSFFLVDSVTLAYQQAAVLRNNIDQNVAHFFGAMGTDLWDKRTWDEHLQRNMVIVCTAEILNQCLLNSYVKMDQINLLIFDEAHHAKKDHPYARIIRDSYFKAQPSQRPRVFGMTASPIDTKGDITEAATRLETLLDSRIATTSKITLLREVVSRPIEKVWAYNRLESPFATELYKLMDTRYGNIKVLEGVYRFAWHASSELGKWCSDRAWWHALADDVLPKLEGNISKLVESNTLNAEHGAVFKDIIRIREASETVKNYSFADPELPGELSPKVQLLRMELSKHFSDTTGTKCIVFTQKRYTAKILNELFTVLNIPHLRPGVLIGVRPGDIGGMNVTFRQQFLALVKFRTGEINCLFATSVAEEGLDIPDCNLVVRFDLYRTLIQYVQSRGRARHCTSTYAIMVEKDNAEHEGRLKEIREAEKIMQRFCETLPEDRILHGNDHDLDSLLQEEEGRRTFTVKSTGAKLTYHSAIAILARYASSLQYEKETVPQVTYVVGHVSNAYVCEVILPEKSPIRGLTGSPAIRKAVAKQSAAFDTCLLLRKHRLLDDYFNSIYHRRLPAMRNAKLAITCKRTNEYDMLLKPSIWAKQRTTPIDKLYGIHISLLPSKPLSRDHRPILLLTREKLPEFPAFSIYLDEDVETKVLSYPLKHGLQISVDELQSLTTFTLRIFRDIFHKVYEHEVQKMPYWLAPAKALDGPGSGTNPRDWTDWDTVSFVHNNDEIPFTRDLNPDSLVNRFIFDNWDGRFRYFTVAVADTLQPSDPPPPSVPRRRHMNNIMNYTLSLSKNSRARFFSGCDWNQPVLQAELVRLRRNLLDKMTTQEKEMQTECFICAEPLRISAIPTSIVSTCLAFPAIISRLDSYLIALEACDELELVIRPDFALEAFTKDSDNTEEHRGQQIHFQRGMGKNYERLEFLGDCFLKMATSIALYTQNPDDDEFDYHVNRMCLICNKNLFNTAIKKQIYRYIRSRGFSRHIWYPDGLTLLHGKDHSKKLLSEGKHALGEKTIADVCEALIGASLLSGGPENRFDMATKAVTALVDSPSHRVSCWKEYITLYTMPKYQTEKPRGSEDDLARHVEEELGYHFTYPRLLASAITHPSLPSTWGYRVPCYQRLEFLGDSLLDMVCVEDLFRRFPDRDPQWLTEHKMAMVSNKFLGALSVKLGFHRRIMAFSNPLQAQITHYVEEIESAQAESRGAVDYWVVAKDPPKCLPDMVEAYLGAIFVDSKFDFQVIEVFFERQIKPFFEDMSIYDTFANKHPTTFLHNKLTNEYGCTNYCLKAGELPTIDGAPAGVLAAVIVHGNVISEARSSSSRYAKVKASEKALAVLDGLLPFEFCQKYHCGCKETQNSSSAVEIGTAI.

Positions 39 to 72 (DPAESSADVHKDEHSSDNSDNDNEAVPKPNDFSQ) are disordered. The segment covering 45-55 (ADVHKDEHSSD) has biased composition (basic and acidic residues). A Helicase ATP-binding domain is found at 134-315 (LFERAKTQNT…EAATRLETLL (182 aa)). 147–154 (LDTGSGKT) contributes to the ATP binding site. A DEAH box motif is present at residues 260–263 (DEAH). The 160-residue stretch at 460–619 (ELSKHFSDTT…ETLPEDRILH (160 aa)) folds into the Helicase C-terminal domain. In terms of domain architecture, Dicer dsRNA-binding fold spans 652-742 (AIAILARYAS…NSIYHRRLPA (91 aa)). The region spanning 892–1020 (DTVSFVHNND…ICAEPLRISA (129 aa)) is the PAZ domain. RNase III domains follow at residues 1044–1203 (IALE…LSGG) and 1254–1406 (ARHV…VDSK). Positions 1295, 1392, and 1395 each coordinate Mg(2+). Residues 1440-1508 (TFLHNKLTNE…SEKALAVLDG (69 aa)) enclose the DRBM domain. 4 residues coordinate Zn(2+): Cys1452, His1479, Cys1520, and Cys1522.

This sequence belongs to the helicase family. Dicer subfamily. It depends on Mg(2+) as a cofactor. The cofactor is Mn(2+).

In terms of biological role, dicer-like endonuclease involved in cleaving double-stranded RNA in the RNA interference (RNAi) pathway. Produces 21 to 25 bp dsRNAs (siRNAs) which target the selective destruction of homologous RNAs leading to sequence-specific suppression of gene expression, called post-transcriptional gene silencing (PTGS). Part of a broad host defense response against viral infection and transposons. In Neosartorya fischeri (strain ATCC 1020 / DSM 3700 / CBS 544.65 / FGSC A1164 / JCM 1740 / NRRL 181 / WB 181) (Aspergillus fischerianus), this protein is Dicer-like protein 1 (dcl1).